The following is a 129-amino-acid chain: Small ribosomal subunit protein uS11 (129 aa).

The protein belongs to the universal ribosomal protein uS11 family. As to quaternary structure, part of the 30S ribosomal subunit. Interacts with proteins S7 and S18. Binds to IF-3.

Located on the platform of the 30S subunit, it bridges several disparate RNA helices of the 16S rRNA. Forms part of the Shine-Dalgarno cleft in the 70S ribosome. The protein is Small ribosomal subunit protein uS11 of Oleidesulfovibrio alaskensis (strain ATCC BAA-1058 / DSM 17464 / G20) (Desulfovibrio alaskensis).